The primary structure comprises 485 residues: Glutamyl-tRNA(Gln) amidotransferase subunit A (485 aa).

Active-site charge relay system residues include Lys-79 and Ser-154. The active-site Acyl-ester intermediate is Ser-178.

It belongs to the amidase family. GatA subfamily. Heterotrimer of A, B and C subunits.

The catalysed reaction is L-glutamyl-tRNA(Gln) + L-glutamine + ATP + H2O = L-glutaminyl-tRNA(Gln) + L-glutamate + ADP + phosphate + H(+). In terms of biological role, allows the formation of correctly charged Gln-tRNA(Gln) through the transamidation of misacylated Glu-tRNA(Gln) in organisms which lack glutaminyl-tRNA synthetase. The reaction takes place in the presence of glutamine and ATP through an activated gamma-phospho-Glu-tRNA(Gln). The sequence is that of Glutamyl-tRNA(Gln) amidotransferase subunit A from Staphylococcus aureus (strain Mu3 / ATCC 700698).